A 727-amino-acid polypeptide reads, in one-letter code: Cadmium-transporting ATPase (727 aa).

Residues 12 to 75 (EMNVYRVQGF…AGAFENLKVS (64 aa)) enclose the HMA domain. Cd(2+) contacts are provided by Cys23 and Cys26. 5 consecutive transmembrane segments (helical) span residues 106 to 126 (STLLFATLLIAFGYLSHFVNG), 130 to 150 (LVTSMLFVGSIVIGGYSLFKV), 171 to 191 (IGATIIGKWAEASIVVILFAI), 336 to 356 (IIMVIAALVAVVPPLFFGGSW), and 364 to 384 (LAVLVVGCPCALVISTPISIV). Asp415 (4-aspartylphosphate intermediate) is an active-site residue. Transmembrane regions (helical) follow at residues 672 to 694 (LNIIKANITFAIGIKIIALLLVI) and 699 to 721 (TLWIAILSDMGATILVALNSLRL).

Belongs to the cation transport ATPase (P-type) (TC 3.A.3) family. Type IB subfamily.

It localises to the cell membrane. It carries out the reaction Cd(2+)(in) + ATP + H2O = Cd(2+)(out) + ADP + phosphate + H(+). With respect to regulation, inhibited by the antibiotic bafilomycin A1. Partially inhibited by DCCD, nigericin and FCCP. Functionally, couples the hydrolysis of ATP with the export of cadmium. Involved in cadmium resistance. The polypeptide is Cadmium-transporting ATPase (Staphylococcus aureus).